A 988-amino-acid polypeptide reads, in one-letter code: MPRRLILSATERGTLLALPESQDDLIRYYTFNDSDLSLIRQRRGDANRLGFAVQLCLLRYPGYALGTDSELPEPVILWVAKQVQTDPASWTKYGERDVTRREHAQELRTYLQLAPFGLSDFRALVRELTELAQQTDKGLLLAGQALESLRQKRRILPALSVIDRACSEAIARANRRVYRALVEPLTDSHRAKLDELLKLKAGSSITWLTWLRQAPLKPNSRHMLEHIERLKTFQLVDLPEVLGRHIHQNRLLKLAREGGQMTPKDLGKFEPQRRYATLAAVVLESTATVIDELVDLHDRILVKLFSGAKHKHQQQFQKQGKAINDKVRLYSKIGQALLEAKEAGSDPYAAIEAVIPWDEFTESVSEAELLARPEGFDHLHLVGENFATLRRYTPALLEVLELRAAPAAQGVLAAVQTLREMNADNLRKVPADAPTAFIKPRWKPLVITPEGLDRRFYEICALSELKNALRSGDIWVKGSRQFRDFDDYLLPAEKFAALKREQALPLAINPNSDQYLEERLQLLDEQLATVARLAKDNELPDAILTESGLKITPLDAAVPDRAQALIDQTSQLLPRIKITELLMDVDDWTGFSRHFTHLKDGAEAKDRTLLLSAILGDAINLGLTKMAESSPGLTYAKLSWLQAWHIRDETYSAALAELVNHQYQHAFAAHWGDGTTSSSDGQRFRAGGRGESTGHVNPKYGSEPGRLFYTHISDQYAPFSTRVVNVGVRDSTYVLDGLLYHESDLRIEEHYTDTAGFTDHVFALMHLLGFRFAPRIRDLGETKLYVPQGVQTYPTLRPLIGGTLNIKHVRAHWDDILRLASSIKQGTVTASLMLRKLGSYPRQNGLAVALRELGRIERTLFILDWLQSVELRRRVHAGLNKGEARNSLARAVFFNRLGEIRDRSFEQQRYRASGLNLVTAAIVLWNTVYLERATQGLVEAGKPVDGELLQFLSPLGWEHINLTGDYVWRQSRRLEDGKFRPLRMPGKP.

It belongs to the transposase 7 family.

Its function is as follows. Required for transposition of transposon Tn501. This is Transposase for transposon Tn501 (tnpA) from Pseudomonas aeruginosa.